Here is a 156-residue protein sequence, read N- to C-terminus: Glutamate-rich protein 2 (156 aa).

Disordered regions lie at residues 29 to 66 and 116 to 156; these read LQDIDDKLSESAEDDGEDDTNDEDDDEDSNPKKNTQAP and EKTQ…EDGS. 2 stretches are compositionally biased toward acidic residues: residues 39–56 and 140–156; these read SAEDDGEDDTNDEDDDED and SDEELSDESSDEGEDGS.

The chain is Glutamate-rich protein 2 (ERICH2) from Homo sapiens (Human).